A 432-amino-acid chain; its full sequence is Adenylosuccinate synthetase (432 aa).

GTP-binding positions include 12–18 and 40–42; these read GDEGKGK and GHT. The Proton acceptor role is filled by aspartate 13. The Mg(2+) site is built by aspartate 13 and glycine 40. IMP is bound by residues 13 to 16, 38 to 41, threonine 132, arginine 146, glutamine 226, threonine 241, and arginine 305; these read DEGK and NAGH. Histidine 41 functions as the Proton donor in the catalytic mechanism. A substrate-binding site is contributed by 301-307; that stretch reads TVTGRKR. GTP contacts are provided by residues arginine 307, 333–335, and 415–417; these read KLD and STS.

Belongs to the adenylosuccinate synthetase family. As to quaternary structure, homodimer. Mg(2+) serves as cofactor.

The protein resides in the cytoplasm. The enzyme catalyses IMP + L-aspartate + GTP = N(6)-(1,2-dicarboxyethyl)-AMP + GDP + phosphate + 2 H(+). The protein operates within purine metabolism; AMP biosynthesis via de novo pathway; AMP from IMP: step 1/2. Functionally, plays an important role in the de novo pathway of purine nucleotide biosynthesis. Catalyzes the first committed step in the biosynthesis of AMP from IMP. The protein is Adenylosuccinate synthetase of Chelativorans sp. (strain BNC1).